A 421-amino-acid chain; its full sequence is Probable mitochondrial chaperone BCS1-A (421 aa).

Residues Met1 to Ser10 are Mitochondrial intermembrane-facing. A helical membrane pass occupies residues Ile11–Phe31. The Mitochondrial matrix portion of the chain corresponds to Lys32–Asn421. ATP is bound at residue Gly228–Ser235.

This sequence belongs to the AAA ATPase family. BCS1 subfamily.

It localises to the mitochondrion inner membrane. The enzyme catalyses ATP + H2O = ADP + phosphate + H(+). Functionally, chaperone necessary for the assembly of mitochondrial respiratory chain complex III. In Dictyostelium discoideum (Social amoeba), this protein is Probable mitochondrial chaperone BCS1-A (bcs1la).